The chain runs to 331 residues: Putative heat stress transcription factor A-6a (331 aa).

Residues 135-160 (RRGAGTGSTTPRAVNCGGGGGEGEVE) form a disordered region. Positions 156–238 (EGEVERLRRD…VERKKRRMLA (83 aa)) form a coiled coil. The interval 162–212 (LRRDKEALARELARLRRQQQEARAQLLDMERRVRGTERRQEQCTEFLARAL) is hydrophobic repeat HR-A/B. A Nuclear localization signal motif is present at residues 230-235 (ERKKRR). A Nuclear export signal motif is present at residues 246-253 (LTFEALAL). The AHA1 motif lies at 270–279 (DMIWYELLGE). Positions 305–313 (AEPWEEMGE) match the AHA2 motif.

This sequence belongs to the HSF family. Class A subfamily. Homotrimer. Post-translationally, exhibits temperature-dependent phosphorylation.

Its subcellular location is the cytoplasm. It localises to the nucleus. Its function is as follows. Transcriptional regulator that specifically binds DNA of heat shock promoter elements (HSE). In Oryza sativa subsp. japonica (Rice), this protein is Putative heat stress transcription factor A-6a (HSFA6A).